The following is a 138-amino-acid chain: Small ribosomal subunit protein uS11c (138 aa).

A disordered region spans residues 1-23; the sequence is MAKPIPRIGSRRNGRIGSRKSAR. Residues 9 to 23 are compositionally biased toward basic residues; that stretch reads GSRRNGRIGSRKSAR.

This sequence belongs to the universal ribosomal protein uS11 family. As to quaternary structure, part of the 30S ribosomal subunit.

It is found in the plastid. Its subcellular location is the chloroplast. The sequence is that of Small ribosomal subunit protein uS11c from Vitis vinifera (Grape).